Consider the following 119-residue polypeptide: Na(+)/H(+) antiporter subunit G (119 aa).

The next 3 membrane-spanning stretches (helical) occupy residues I7–F29, T44–V61, and V66–G88.

It belongs to the CPA3 antiporters (TC 2.A.63) subunit G family. In terms of assembly, forms a heterooligomeric complex that consists of seven subunits: MrpA, MrpB, MrpC, MrpD, MrpE, MrpF and MrpG.

It localises to the cell membrane. Its function is as follows. Mnh complex is a Na(+)Li(+)/H(+) antiporter involved in Na(+) and/or Li(+) excretion and Na(+) resistance. Na(+)/H(+) antiport consumes a transmembrane electrical potential, and is thus inferred to be electrogenic. Does not transport K(+), Ca(2+) or Mg(2+). The sequence is that of Na(+)/H(+) antiporter subunit G (mrpG) from Alkalihalophilus pseudofirmus (strain ATCC BAA-2126 / JCM 17055 / OF4) (Bacillus pseudofirmus).